The primary structure comprises 374 residues: Methylthioribose-1-phosphate isomerase (374 aa).

D251 (proton donor) is an active-site residue.

The protein belongs to the eIF-2B alpha/beta/delta subunits family. MtnA subfamily.

It localises to the cytoplasm. The protein resides in the nucleus. It catalyses the reaction 5-(methylsulfanyl)-alpha-D-ribose 1-phosphate = 5-(methylsulfanyl)-D-ribulose 1-phosphate. The protein operates within amino-acid biosynthesis; L-methionine biosynthesis via salvage pathway; L-methionine from S-methyl-5-thio-alpha-D-ribose 1-phosphate: step 1/6. In terms of biological role, catalyzes the interconversion of methylthioribose-1-phosphate (MTR-1-P) into methylthioribulose-1-phosphate (MTRu-1-P). This Oryza sativa subsp. indica (Rice) protein is Methylthioribose-1-phosphate isomerase.